A 303-amino-acid chain; its full sequence is UDP-3-O-acyl-N-acetylglucosamine deacetylase (303 aa).

Zn(2+) contacts are provided by His-78, His-237, and Asp-241. His-264 functions as the Proton donor in the catalytic mechanism.

It belongs to the LpxC family. The cofactor is Zn(2+).

The catalysed reaction is a UDP-3-O-[(3R)-3-hydroxyacyl]-N-acetyl-alpha-D-glucosamine + H2O = a UDP-3-O-[(3R)-3-hydroxyacyl]-alpha-D-glucosamine + acetate. It functions in the pathway glycolipid biosynthesis; lipid IV(A) biosynthesis; lipid IV(A) from (3R)-3-hydroxytetradecanoyl-[acyl-carrier-protein] and UDP-N-acetyl-alpha-D-glucosamine: step 2/6. Catalyzes the hydrolysis of UDP-3-O-myristoyl-N-acetylglucosamine to form UDP-3-O-myristoylglucosamine and acetate, the committed step in lipid A biosynthesis. The protein is UDP-3-O-acyl-N-acetylglucosamine deacetylase of Stenotrophomonas maltophilia (strain R551-3).